Here is a 300-residue protein sequence, read N- to C-terminus: Protein YIF1B-B (300 aa).

A disordered region spans residues 1-46; it reads MNQESSFRAPPKRRVRGSNPNISNPHQLFDDTSGGPVPHGGDFPNH. The Cytoplasmic segment spans residues 1-142; it reads MNQESSFRAP…APRFDINAPD (142 aa). A helical membrane pass occupies residues 143-163; it reads LYIPVMAFITYILVAGLALGT. Topologically, residues 164–178 are extracellular; the sequence is QSRFSPEILGMQASS. Residues 179 to 199 traverse the membrane as a helical segment; it reads ALAWLIVEVLAILLSLYLVTV. Residues 200–205 lie on the Cytoplasmic side of the membrane; the sequence is NTDLTT. Residues 206–226 traverse the membrane as a helical segment; it reads VDLVAFSGYKYVGMISGVIAG. Residue L227 is a topological domain, extracellular. Residues 228-248 traverse the membrane as a helical segment; the sequence is LFGNTGYYVVLAWCCISIVFF. The Cytoplasmic portion of the chain corresponds to 249 to 278; that stretch reads MIRTLRLKILSEAAAEGVLVRGARNQLRMY. Residues 279 to 299 traverse the membrane as a helical segment; that stretch reads LTMAIAAVQPIFMYWLTYHLV. R300 is a topological domain (extracellular).

This sequence belongs to the YIF1 family.

The protein localises to the endoplasmic reticulum membrane. The protein resides in the golgi apparatus membrane. It localises to the endoplasmic reticulum-Golgi intermediate compartment membrane. Functions in endoplasmic reticulum to Golgi vesicle-mediated transport and regulates the proper organization of the endoplasmic reticulum and the Golgi. Plays a key role in targeting to neuronal dendrites receptors such as HTR1A. Plays also a role in primary cilium and sperm flagellum assembly probably through protein transport to these compartments. In Xenopus laevis (African clawed frog), this protein is Protein YIF1B-B (yif1b-b).